The sequence spans 499 residues: Anaerobic magnesium-protoporphyrin IX monomethyl ester cyclase (499 aa).

Residues 9-145 (PHPAIGSRIP…AALENHNDLN (137 aa)) form the B12-binding domain. The 233-residue stretch at 188-420 (YGGKQAVVIQ…PPWRIFLWVK (233 aa)) folds into the Radical SAM core domain. [4Fe-4S] cluster is bound by residues C202, C206, and C209.

Belongs to the BchE family. [4Fe-4S] cluster serves as cofactor. The cofactor is adenosylcob(III)alamin.

It catalyses the reaction Mg-protoporphyrin IX 13-monomethyl ester + 3 S-adenosyl-L-methionine + H2O = 3,8-divinyl protochlorophyllide a + 3 5'-deoxyadenosine + 3 L-methionine + 4 H(+). The protein operates within porphyrin-containing compound metabolism; bacteriochlorophyll biosynthesis (light-independent). In terms of biological role, involved in the tetrapyrrole biosynthetic pathways leading to chlorophyll and bacteriochlorophyll (BChl). Catalyzes the anaerobic formation of the isocyclic ring (E-ring) in Mg-protoporphyrin monomethyl ester (MPE) to yield protochlorophyllide a (PChlide a) via a six-electron oxidation and the formation of an oxo group at position C13 using oxygen from a water molecule. This is Anaerobic magnesium-protoporphyrin IX monomethyl ester cyclase from Synechocystis sp. (strain ATCC 27184 / PCC 6803 / Kazusa).